A 367-amino-acid polypeptide reads, in one-letter code: Anhydro-N-acetylmuramic acid kinase (367 aa).

13-20 (GTSMDGAD) contributes to the ATP binding site.

This sequence belongs to the anhydro-N-acetylmuramic acid kinase family.

It carries out the reaction 1,6-anhydro-N-acetyl-beta-muramate + ATP + H2O = N-acetyl-D-muramate 6-phosphate + ADP + H(+). Its pathway is amino-sugar metabolism; 1,6-anhydro-N-acetylmuramate degradation. It functions in the pathway cell wall biogenesis; peptidoglycan recycling. Catalyzes the specific phosphorylation of 1,6-anhydro-N-acetylmuramic acid (anhMurNAc) with the simultaneous cleavage of the 1,6-anhydro ring, generating MurNAc-6-P. Is required for the utilization of anhMurNAc either imported from the medium or derived from its own cell wall murein, and thus plays a role in cell wall recycling. The protein is Anhydro-N-acetylmuramic acid kinase of Neisseria meningitidis serogroup B (strain ATCC BAA-335 / MC58).